Consider the following 1850-residue polypeptide: Voltage-dependent L-type calcium channel subunit alpha-1S (1850 aa).

The tract at residues 1 to 23 (MEPSSPQDEGLRKKQPKKPVPEI) is disordered. Topologically, residues 1 to 51 (MEPSSPQDEGLRKKQPKKPVPEILPRPPRALFCLTLQNPLRKACISVVEWK) are cytoplasmic. An I repeat occupies 38–337 (NPLRKACISV…LVLGVLSGEF (300 aa)). A helical membrane pass occupies residues 52 to 70 (PFETIILLTIFANCVALAV). Over 71-85 (YLPMPEDDNNTLNLG) the chain is Extracellular. A helical membrane pass occupies residues 86–106 (LEKLEYFFLIVFSIEAAMKII). Residues 107–115 (AYGFLFHQD) are Cytoplasmic-facing. The chain crosses the membrane as a helical span at residues 116 to 136 (AYLRSGWNVLDFIIVFLGVFT). Over 137-160 (AILEQVNIIQTNTAPMSSKGAGLD) the chain is Extracellular. Residues 161-179 (VKALRAFRVLRPLRLVSGV) form a helical membrane-spanning segment. Topologically, residues 180–196 (PSLQVVLNSIFKAMLPL) are cytoplasmic. Residues 197 to 218 (FHIALLVLFMVIIYAIIGLELF) form a helical membrane-spanning segment. Over 219–279 (KGKMHKTCYF…HGITHFDNFG (61 aa)) the chain is Extracellular. 2 disulfide bridges follow: cysteine 226-cysteine 254 and cysteine 245-cysteine 261. The segment at residues 280 to 301 (FSMLTVYQCISMEGWTDVLYWV) is an intramembrane region (pore-forming). A Selectivity filter of repeat I motif is present at residues 290 to 293 (SMEG). A Ca(2+)-binding site is contributed by glutamate 292. Residues 302 to 309 (NDAIGNEW) are Extracellular-facing. Residues 310–330 (PWIYFVTLILLGSFFILNLVL) traverse the membrane as a helical segment. Over 331–432 (GVLSGEFTKE…WKCHDLVKSK (102 aa)) the chain is Cytoplasmic. The binding to the beta subunit stretch occupies residues 357 to 374 (QQLEEDLRGYMSWITQGE). Residues serine 393 and serine 397 each carry the phosphoserine modification. The stretch at 418-664 (NRVFRWKCHD…VFLAIAVDNL (247 aa)) is one II repeat. A helical membrane pass occupies residues 433 to 451 (VFYWLVILIVALNTLSIAS). Residues 452–462 (EHHNQPLWLTH) lie on the Extracellular side of the membrane. Residues 463 to 483 (LQDVANRVLLALFTIEMLMKM) traverse the membrane as a helical segment. Topologically, residues 484 to 494 (YGLGLRQYFMS) are cytoplasmic. The helical transmembrane segment at 495 to 514 (IFNRFDCFVVCSGILEILLV) threads the bilayer. At 515–523 (ESGAMTPLG) the chain is on the extracellular side. A helical transmembrane segment spans residues 524 to 542 (ISVLRCIRLLRLFKITKYW). The Cytoplasmic segment spans residues 543 to 561 (TSLSNLVASLLNSIRSIAS). Residues 562–581 (LLLLLFLFMIIFALLGMQLF) traverse the membrane as a helical segment. Over 582-601 (GGRYDFEDTEVRRSNFDNFP) the chain is Extracellular. Residues 602 to 623 (QALISVFQVLTGEDWNSVMYNG) constitute an intramembrane region (pore-forming). Positions 612 to 615 (TGED) match the Selectivity filter of repeat II motif. Glutamate 614 contacts Ca(2+). Residues 624–633 (IMAYGGPSYP) are Extracellular-facing. The helical transmembrane segment at 634 to 653 (GVLVCIYFIILFVCGNYILL) threads the bilayer. Over 654 to 799 (NVFLAIAVDN…VLCHRIVNAT (146 aa)) the chain is Cytoplasmic. Disordered regions lie at residues 673-717 (AQKA…IPTT) and 731-758 (EVKD…SPRP). Residue serine 687 is modified to Phosphoserine; by PKA. The segment covering 690 to 711 (LPDKSEEERSTMTKKLEQKPKG) has biased composition (basic and acidic residues). The segment covering 742-751 (PGDDEEDEPE) has biased composition (acidic residues). Residues 786 to 1068 (NKIRVLCHRI…IFVGFVIVTF (283 aa)) form an III repeat. Residues 800–818 (WFTNFILLFILLSSAALAA) traverse the membrane as a helical segment. The Extracellular segment spans residues 819–830 (EDPIRADSMRNQ). A helical transmembrane segment spans residues 831 to 850 (ILEYFDYVFTAVFTVEIVLK). The Cytoplasmic segment spans residues 851–866 (MTTYGAFLHKGSFCRN). The helical transmembrane segment at 867–885 (YFNILDLLVVAVSLISMGL) threads the bilayer. Topologically, residues 886-892 (ESSAISV) are extracellular. Residues 893–911 (VKILRVLRVLRPLRAINRA) form a helical membrane-spanning segment. Topologically, residues 912-930 (KGLKHVVQCVFVAIRTIGN) are cytoplasmic. A helical transmembrane segment spans residues 931–950 (IVLVTTLLQFMFACIGVQLF). Over 951–1000 (KGKFYSCNDLSKMTEEECRGYYYIYKDGDPTQIELRPRQWIHNDFHFDNV) the chain is Extracellular. A disulfide bridge links cysteine 957 with cysteine 968. The interval 988-1077 (RQWIHNDFHF…FQEQGETEYK (90 aa)) is dihydropyridine binding. Positions 1001–1021 (LSAMMSLFTVSTFEGWPQLLY) form an intramembrane region, pore-forming. Residues 1012 to 1015 (TFEG) carry the Selectivity filter of repeat III motif. Residue glutamate 1014 coordinates Ca(2+). Residues 1022-1038 (KAIDSNEEDTGPVYNNR) lie on the Extracellular side of the membrane. A helical membrane pass occupies residues 1039 to 1060 (VEMAIFFIIYIILIAFFMMNIF). The Cytoplasmic portion of the chain corresponds to 1061–1118 (VGFVIVTFQEQGETEYKNCELDKNQRQCVQYALKARPLRCYIPKNPYQYQVWYVVTSS). The IV repeat unit spans residues 1105 to 1384 (NPYQYQVWYV…LFVAVIMDNF (280 aa)). Residues 1119–1140 (YFEYLMFALIMLNTICLGMQHY) form a helical membrane-spanning segment. N-linked (GlcNAc...) asparagine glycosylation occurs at asparagine 1141. Topologically, residues 1141-1148 (NQSEQMNH) are extracellular. Residues 1149 to 1170 (ISDILNVAFTIIFTLEMILKLI) traverse the membrane as a helical segment. The Cytoplasmic segment spans residues 1171-1180 (AFKPRGYFGD). A helical transmembrane segment spans residues 1181 to 1200 (PWNVFDFLIVIGSIIDVILS). Residues 1201–1231 (EIDTLLASSGGLYCLGGGCGNVDPDESARIS) are Extracellular-facing. Residues 1232 to 1250 (SAFFRLFRVMRLIKLLSRA) form a helical membrane-spanning segment. The Cytoplasmic segment spans residues 1251–1268 (EGVRTLLWTFIKSFQALP). A helical membrane pass occupies residues 1269–1289 (YVALLIVMLFFIYAVIGMQMF). Topologically, residues 1290 to 1311 (GKIAMVDGTQINRNNNFQTFPQ) are extracellular. Residues 1312 to 1330 (AVLLLFRCATGEAWQEILL) constitute an intramembrane region (pore-forming). Residues 1321–1324 (TGEA) carry the Selectivity filter of repeat IV motif. Topologically, residues 1331-1356 (ACSYGKRCDPESDYAPGEEYACGTNF) are extracellular. The tract at residues 1337 to 1403 (RCDPESDYAP…LGPHHLDEFK (67 aa)) is dihydropyridine binding. Cysteine 1338 and cysteine 1352 are oxidised to a cystine. The phenylalkylamine binding stretch occupies residues 1349-1391 (EYACGTNFAYYYFISFYMLCAFLIINLFVAVIMDNFDYLTRDW). The chain crosses the membrane as a helical span at residues 1357 to 1381 (AYYYFISFYMLCAFLIINLFVAVIM). Residues 1382–1850 (DNFDYLTRDW…PKGGAMPREP (469 aa)) lie on the Cytoplasmic side of the membrane. An interaction with calmodulin region spans residues 1522 to 1542 (KFYATFLIQEHFRKFMKRQEE). Serine 1575 is subject to Phosphoserine; by PKA and CAMK2. Residue threonine 1579 is modified to Phosphothreonine. Serine 1617 bears the Phosphoserine; by PKA mark. The disordered stretch occupies residues 1697–1779 (PVTREGPFSQ…FEERVPRNSA (83 aa)). Positions 1706–1716 (QPCSVSGVNSR) are enriched in polar residues. 2 stretches are compositionally biased toward basic and acidic residues: residues 1717–1726 (SHVDKLERQM) and 1745–1756 (QEKHPVHEEGKG).

It belongs to the calcium channel alpha-1 subunit (TC 1.A.1.11) family. CACNA1S subfamily. Component of a calcium channel complex consisting of a pore-forming alpha subunit (CACNA1S) and the ancillary subunits CACNB1 or CACNB2, CACNG1 and CACNA2D1. The channel complex contains alpha, beta, gamma and delta subunits in a 1:1:1:1 ratio, i.e. it contains either CACNB1 or CACNB2. CACNA1S channel activity is modulated by the auxiliary subunits (CACNB1 or CACNB2, CACNG1 and CACNA2D1). Interacts with DYSF and JSRP1. Interacts with RYR1. Interacts with STAC, STAC2 and STAC3 (via their SH3 domains). Interacts with CALM. The alpha-1S subunit is found in two isoforms in the skeletal muscle: a minor form of 212 kDa containing the complete amino acid sequence, and a major form of 190 kDa derived from the full-length form by post-translational proteolysis close to Phe-1690. Post-translationally, phosphorylated. Phosphorylation by PKA activates the calcium channel. Both the minor and major forms are phosphorylated in vitro by PKA. Phosphorylation at Ser-1575 is involved in beta-adrenergic-mediated regulation of the channel. As to expression, skeletal muscle specific.

The protein resides in the cell membrane. It is found in the sarcolemma. It localises to the T-tubule. The catalysed reaction is Ca(2+)(in) = Ca(2+)(out). With respect to regulation, channel activity is blocked by dihydropyridines (DHP), phenylalkylamines, and by benzothiazepines. Its function is as follows. Pore-forming, alpha-1S subunit of the voltage-gated calcium channel that gives rise to L-type calcium currents in skeletal muscle. Calcium channels containing the alpha-1S subunit play an important role in excitation-contraction coupling in skeletal muscle via their interaction with RYR1, which triggers Ca(2+) release from the sarcplasmic reticulum and ultimately results in muscle contraction. Long-lasting (L-type) calcium channels belong to the 'high-voltage activated' (HVA) group. The polypeptide is Voltage-dependent L-type calcium channel subunit alpha-1S (Cacna1s) (Rattus norvegicus (Rat)).